The primary structure comprises 200 residues: Rho-related protein racH (200 aa).

11 to 18 serves as a coordination point for GTP; sequence GDMSVGKT. The Effector region motif lies at 33–41; that stretch reads YVPTVFDNY. GTP is bound by residues 58-62 and 117-120; these read DTAGS and TKLD. Residues 178–200 form a disordered region; sequence EELAKSKKDSKKGDKDSKDCIIQ. C197 carries the cysteine methyl ester modification. C197 is lipidated: S-geranylgeranyl cysteine. Positions 198–200 are cleaved as a propeptide — removed in mature form; that stretch reads IIQ.

It belongs to the small GTPase superfamily. Rho family.

Its subcellular location is the cell membrane. The chain is Rho-related protein racH (racH) from Dictyostelium discoideum (Social amoeba).